We begin with the raw amino-acid sequence, 436 residues long: Protein translocase subunit SecY (436 aa).

10 consecutive transmembrane segments (helical) span residues 19-39 (ILFT…TVPG), 68-88 (FSVF…VQLL), 116-136 (YISL…FNAL), 151-171 (LFIG…GEQI), 179-199 (GVSM…VKGI), 216-236 (IIFV…TTYV), 269-289 (VIPV…LQFL), 313-333 (GIAM…FVQI), 372-392 (VGSL…DLFG), and 395-415 (DTVA…IEGM).

This sequence belongs to the SecY/SEC61-alpha family. As to quaternary structure, component of the Sec protein translocase complex. Heterotrimer consisting of SecY, SecE and SecG subunits. The heterotrimers can form oligomers, although 1 heterotrimer is thought to be able to translocate proteins. Interacts with the ribosome. Interacts with SecDF, and other proteins may be involved. Interacts with SecA.

It localises to the cell membrane. In terms of biological role, the central subunit of the protein translocation channel SecYEG. Consists of two halves formed by TMs 1-5 and 6-10. These two domains form a lateral gate at the front which open onto the bilayer between TMs 2 and 7, and are clamped together by SecE at the back. The channel is closed by both a pore ring composed of hydrophobic SecY resides and a short helix (helix 2A) on the extracellular side of the membrane which forms a plug. The plug probably moves laterally to allow the channel to open. The ring and the pore may move independently. This Streptococcus gordonii (strain Challis / ATCC 35105 / BCRC 15272 / CH1 / DL1 / V288) protein is Protein translocase subunit SecY.